The primary structure comprises 365 residues: Holliday junction branch migration complex subunit RuvB (365 aa).

Residues 1–191 are large ATPase domain (RuvB-L); that stretch reads MNFDPIDDFD…FGFTAHMDFY (191 aa). Residues L30, R31, G72, K75, T76, S77, 138-140, R181, Y191, and R228 each bind ATP; that span reads EDF. T76 contributes to the Mg(2+) binding site. The segment at 192–262 is small ATPAse domain (RuvB-S); that stretch reads EPEELQQILM…VAQAALAVYD (71 aa). A head domain (RuvB-H) region spans residues 265-365; sequence QLGLDRLDRS…QATLFDPNGE (101 aa). Residues R320 and R325 each contribute to the DNA site.

It belongs to the RuvB family. As to quaternary structure, homohexamer. Forms an RuvA(8)-RuvB(12)-Holliday junction (HJ) complex. HJ DNA is sandwiched between 2 RuvA tetramers; dsDNA enters through RuvA and exits via RuvB. An RuvB hexamer assembles on each DNA strand where it exits the tetramer. Each RuvB hexamer is contacted by two RuvA subunits (via domain III) on 2 adjacent RuvB subunits; this complex drives branch migration. In the full resolvosome a probable DNA-RuvA(4)-RuvB(12)-RuvC(2) complex forms which resolves the HJ.

It is found in the cytoplasm. The enzyme catalyses ATP + H2O = ADP + phosphate + H(+). In terms of biological role, the RuvA-RuvB-RuvC complex processes Holliday junction (HJ) DNA during genetic recombination and DNA repair, while the RuvA-RuvB complex plays an important role in the rescue of blocked DNA replication forks via replication fork reversal (RFR). RuvA specifically binds to HJ cruciform DNA, conferring on it an open structure. The RuvB hexamer acts as an ATP-dependent pump, pulling dsDNA into and through the RuvAB complex. RuvB forms 2 homohexamers on either side of HJ DNA bound by 1 or 2 RuvA tetramers; 4 subunits per hexamer contact DNA at a time. Coordinated motions by a converter formed by DNA-disengaged RuvB subunits stimulates ATP hydrolysis and nucleotide exchange. Immobilization of the converter enables RuvB to convert the ATP-contained energy into a lever motion, pulling 2 nucleotides of DNA out of the RuvA tetramer per ATP hydrolyzed, thus driving DNA branch migration. The RuvB motors rotate together with the DNA substrate, which together with the progressing nucleotide cycle form the mechanistic basis for DNA recombination by continuous HJ branch migration. Branch migration allows RuvC to scan DNA until it finds its consensus sequence, where it cleaves and resolves cruciform DNA. The chain is Holliday junction branch migration complex subunit RuvB from Rhodococcus erythropolis (strain PR4 / NBRC 100887).